Consider the following 229-residue polypeptide: Ribonuclease T (229 aa).

The region spanning 23–197 (VIIDVETAGF…YDTERTAKLF (175 aa)) is the Exonuclease domain. Residues aspartate 26, glutamate 28, histidine 184, and aspartate 189 each coordinate Mg(2+). The active-site Proton donor/acceptor is histidine 184.

Belongs to the RNase T family. Homodimer. It depends on Mg(2+) as a cofactor.

Functionally, trims short 3' overhangs of a variety of RNA species, leaving a one or two nucleotide 3' overhang. Responsible for the end-turnover of tRNA: specifically removes the terminal AMP residue from uncharged tRNA (tRNA-C-C-A). Also appears to be involved in tRNA biosynthesis. The polypeptide is Ribonuclease T (Haemophilus influenzae (strain ATCC 51907 / DSM 11121 / KW20 / Rd)).